A 470-amino-acid polypeptide reads, in one-letter code: Zinc finger protein pat-9 (470 aa).

The interval 1 to 25 (MENRTPMQHHSGYEIVKSEPPSTPK) is disordered. 3 C2H2-type zinc fingers span residues 84-106 (YPCN…QNSH), 112-134 (FECD…KRIH), and 140-162 (FVCT…KDMH). The segment at 191–235 (MEQEENGGLPASSSASSVISHPLITTTSGNKKRSKAAKAKQTPSS) is disordered. The Nuclear localization signal motif lies at 221 to 230 (KKRSKAAKAK).

This sequence belongs to the krueppel C2H2-type zinc-finger protein family. In terms of tissue distribution, expressed in body wall muscle and gonad (at protein level).

It is found in the nucleus. The protein localises to the chromosome. Probable transcription factor; required for proper organization of muscle myofilaments and for their recruitment to the M line. This chain is Zinc finger protein pat-9, found in Caenorhabditis elegans.